A 268-amino-acid polypeptide reads, in one-letter code: MKKLHREICGPVGLVPTMGYLHEGHLSLVRASKKQDINTVASIFVNPTQFGPHEDFKKYPRDEKRDMAMLENTGVDYVFVPSVEDMYPAGFDSWVEPGILQQCLEGAVRPGHFRGVCTVVAKLFTIIRPDRAYFGQKDYQQYLIIKRMASDLNLDVSVEMLPIIRENDGLALSSRNTYLSPAERQAALVLYRSLLTARSLFDEKEHRAEVIRKKMTDVIQHESMAEIDYVSLSHQDTLCESDEVSAKTIALVAARFGKTRLIDNMFLA.

Position 18–25 (18–25 (MGYLHEGH)) interacts with ATP. The Proton donor role is filled by His-25. Gln-49 lines the (R)-pantoate pocket. Gln-49 serves as a coordination point for beta-alanine. An ATP-binding site is contributed by 135 to 138 (GQKD). Gln-141 serves as a coordination point for (R)-pantoate. ATP-binding positions include Ile-164 and 172-175 (LSSR).

Belongs to the pantothenate synthetase family. As to quaternary structure, homodimer.

Its subcellular location is the cytoplasm. It catalyses the reaction (R)-pantoate + beta-alanine + ATP = (R)-pantothenate + AMP + diphosphate + H(+). It participates in cofactor biosynthesis; (R)-pantothenate biosynthesis; (R)-pantothenate from (R)-pantoate and beta-alanine: step 1/1. In terms of biological role, catalyzes the condensation of pantoate with beta-alanine in an ATP-dependent reaction via a pantoyl-adenylate intermediate. The chain is Pantothenate synthetase from Dehalococcoides mccartyi (strain CBDB1).